A 555-amino-acid polypeptide reads, in one-letter code: Protein NRT1/ PTR FAMILY 5.12 (555 aa).

2 helical membrane passes run 53–73 and 83–103; these read FAYFGIASNLITYFTEALGES and LWLGTAAFLPLIWGSIADSFL. Threonine 108 carries the post-translational modification Phosphothreonine. 10 helical membrane-spanning segments follow: residues 109–129, 148–168, 190–210, 221–241, 315–335, 357–377, 401–421, 443–463, 482–502, and 526–546; these read ILLTSSFYIMGLGLLTFSATI, VIIFFCALYLIALGEGGFKVC, SYFNWLYFAISIGILTTRLVT, LGYAIPCLSMMLALFLFLLGI, AVLSLIPIWLCSLVFGIVFAQ, VPAATLQCFISLAILVFIPIY, ISTGIFLSIISMVIAALVEMK, VCWLIPQYILFGVSDVFTMVG, ALYLSIIGIGNFLSSFMVSVI, and YFYWLLACLSSLAFIFTVYFA.

It belongs to the major facilitator superfamily. Proton-dependent oligopeptide transporter (POT/PTR) (TC 2.A.17) family. As to expression, expressed in shoots and roots.

The protein resides in the membrane. This Arabidopsis thaliana (Mouse-ear cress) protein is Protein NRT1/ PTR FAMILY 5.12 (NPF5.12).